We begin with the raw amino-acid sequence, 117 residues long: Large ribosomal subunit protein uL22 (117 aa).

Belongs to the universal ribosomal protein uL22 family. Part of the 50S ribosomal subunit.

Its function is as follows. This protein binds specifically to 23S rRNA; its binding is stimulated by other ribosomal proteins, e.g. L4, L17, and L20. It is important during the early stages of 50S assembly. It makes multiple contacts with different domains of the 23S rRNA in the assembled 50S subunit and ribosome. In terms of biological role, the globular domain of the protein is located near the polypeptide exit tunnel on the outside of the subunit, while an extended beta-hairpin is found that lines the wall of the exit tunnel in the center of the 70S ribosome. The polypeptide is Large ribosomal subunit protein uL22 (Lacticaseibacillus casei (strain BL23) (Lactobacillus casei)).